A 63-amino-acid polypeptide reads, in one-letter code: Large ribosomal subunit protein bL35 (63 aa).

It belongs to the bacterial ribosomal protein bL35 family.

The polypeptide is Large ribosomal subunit protein bL35 (Campylobacter hominis (strain ATCC BAA-381 / DSM 21671 / CCUG 45161 / LMG 19568 / NCTC 13146 / CH001A)).